The chain runs to 290 residues: Flap endonuclease Xni (290 aa).

Aspartate 125 is a Mg(2+) binding site. A 5'-3' exonuclease domain is found at 181 to 275 (VKTSQLIDFW…DIRLTTSSSA (95 aa)). Positions 192, 203, and 206 each coordinate K(+). An interaction with DNA region spans residues 205–210 (GIGQVT).

The protein belongs to the Xni family. Mg(2+) is required as a cofactor. It depends on K(+) as a cofactor.

Functionally, has flap endonuclease activity. During DNA replication, flap endonucleases cleave the 5'-overhanging flap structure that is generated by displacement synthesis when DNA polymerase encounters the 5'-end of a downstream Okazaki fragment. The chain is Flap endonuclease Xni from Colwellia psychrerythraea (strain 34H / ATCC BAA-681) (Vibrio psychroerythus).